Here is an 89-residue protein sequence, read N- to C-terminus: Small ribosomal subunit protein uS15 (89 aa).

This sequence belongs to the universal ribosomal protein uS15 family. As to quaternary structure, part of the 30S ribosomal subunit. Forms a bridge to the 50S subunit in the 70S ribosome, contacting the 23S rRNA.

Functionally, one of the primary rRNA binding proteins, it binds directly to 16S rRNA where it helps nucleate assembly of the platform of the 30S subunit by binding and bridging several RNA helices of the 16S rRNA. Forms an intersubunit bridge (bridge B4) with the 23S rRNA of the 50S subunit in the ribosome. The chain is Small ribosomal subunit protein uS15 from Shewanella loihica (strain ATCC BAA-1088 / PV-4).